A 555-amino-acid chain; its full sequence is Aerobic glycerol-3-phosphate dehydrogenase (555 aa).

Residue 24–52 (DLFIIGGGITGAGTALDAASRGMKVALSE) participates in FAD binding.

This sequence belongs to the FAD-dependent glycerol-3-phosphate dehydrogenase family. FAD serves as cofactor.

Its subcellular location is the cytoplasm. The catalysed reaction is a quinone + sn-glycerol 3-phosphate = dihydroxyacetone phosphate + a quinol. It participates in polyol metabolism; glycerol degradation via glycerol kinase pathway; glycerone phosphate from sn-glycerol 3-phosphate (aerobic route): step 1/1. The protein is Aerobic glycerol-3-phosphate dehydrogenase (glpD) of Bacillus subtilis (strain 168).